The primary structure comprises 262 residues: Sperm microtubule inner protein 6 (262 aa).

It belongs to the SPMIP6 family. As to quaternary structure, microtubule inner protein component of sperm flagellar doublet microtubules. Interacts with alpha-tubulin. Expressed in testis. Strongly expressed in ciliated epithelial cells with lower levels in goblet cells (at protein level).

It is found in the cytoplasm. It localises to the cytoskeleton. Its subcellular location is the nucleus. The protein resides in the mitochondrion. The protein localises to the flagellum axoneme. May participate in intramanchette transport and midpiece formation of the sperm tail. May play a potential role in somatic cell proliferation. The protein is Sperm microtubule inner protein 6 of Homo sapiens (Human).